The following is a 554-amino-acid chain: Hydroxylamine reductase (554 aa).

Positions 3, 6, 18, and 25 each coordinate [2Fe-2S] cluster. Residues His252, Glu276, Cys320, Cys408, Cys436, Cys461, Glu495, and Lys497 each coordinate hybrid [4Fe-2O-2S] cluster. A Cysteine persulfide modification is found at Cys408.

It belongs to the HCP family. [2Fe-2S] cluster serves as cofactor. Requires hybrid [4Fe-2O-2S] cluster as cofactor.

The protein resides in the cytoplasm. The enzyme catalyses A + NH4(+) + H2O = hydroxylamine + AH2 + H(+). Catalyzes the reduction of hydroxylamine to form NH(3) and H(2)O. The sequence is that of Hydroxylamine reductase from Shewanella putrefaciens (strain CN-32 / ATCC BAA-453).